The primary structure comprises 441 residues: Tubulin beta-1 chain (441 aa).

GTP contacts are provided by Q11, E69, S138, G142, T143, G144, N204, and N226. E69 contributes to the Mg(2+) binding site.

Belongs to the tubulin family. In terms of assembly, dimer of alpha and beta chains. A typical microtubule is a hollow water-filled tube with an outer diameter of 25 nm and an inner diameter of 15 nM. Alpha-beta heterodimers associate head-to-tail to form protofilaments running lengthwise along the microtubule wall with the beta-tubulin subunit facing the microtubule plus end conferring a structural polarity. Microtubules usually have 13 protofilaments but different protofilament numbers can be found in some organisms and specialized cells. The cofactor is Mg(2+). Expressed primarily in touch receptor neurons.

It is found in the cytoplasm. It localises to the cytoskeleton. Functionally, tubulin is the major constituent of microtubules, a cylinder consisting of laterally associated linear protofilaments composed of alpha- and beta-tubulin heterodimers. Microtubules grow by the addition of GTP-tubulin dimers to the microtubule end, where a stabilizing cap forms. Below the cap, tubulin dimers are in GDP-bound state, owing to GTPase activity of alpha-tubulin. Plays a role in mechanosensory transduction (touch sensitivity). Mec-7 beta-tubulin is required for the production of 15-protofilament microtubules. The polypeptide is Tubulin beta-1 chain (mec-7) (Caenorhabditis briggsae).